We begin with the raw amino-acid sequence, 276 residues long: Rhomboid protease GlpG (276 aa).

6 helical membrane passes run 94–114 (GPVT…MQIL), 142–162 (ALMH…WYLG), 169–189 (LGSG…GYVQ), 192–212 (FSGP…GYVW), 229–249 (LIIF…GMSM), and 250–270 (ANGA…VDSL). S201 (nucleophile) is an active-site residue. H254 is a catalytic residue.

It belongs to the peptidase S54 family.

Its subcellular location is the cell inner membrane. The catalysed reaction is Cleaves type-1 transmembrane domains using a catalytic dyad composed of serine and histidine that are contributed by different transmembrane domains.. Its function is as follows. Rhomboid-type serine protease that catalyzes intramembrane proteolysis. This is Rhomboid protease GlpG from Escherichia coli O45:K1 (strain S88 / ExPEC).